We begin with the raw amino-acid sequence, 169 residues long: Heat shock protein beta-7 (169 aa).

The segment at 1–37 (MSHRTSSAFRAERSFRSSSSSSSSSSSSASRALPAQD) is disordered. Residues 1–70 (MSHRTSSAFR…PLAFPARPGG (70 aa)) form a required for localization to SC35 splicing speckles region. Residues 16-32 (RSSSSSSSSSSSSASRA) show a composition bias toward low complexity. In terms of domain architecture, sHSP spans 61 to 169 (PLAFPARPGG…QQTFRTEIKI (109 aa)).

It belongs to the small heat shock protein (HSP20) family. Interacts with C-terminal domain of actin-binding protein 280. As to expression, found in both cardiac and slow skeletal (soleus) muscle.

It localises to the cytoplasm. The protein localises to the nucleus. Its subcellular location is the cajal body. The chain is Heat shock protein beta-7 (Hspb7) from Mus musculus (Mouse).